A 311-amino-acid polypeptide reads, in one-letter code: Methionyl-tRNA formyltransferase (311 aa).

Residue 112-115 (SLLP) participates in (6S)-5,6,7,8-tetrahydrofolate binding.

It belongs to the Fmt family.

The catalysed reaction is L-methionyl-tRNA(fMet) + (6R)-10-formyltetrahydrofolate = N-formyl-L-methionyl-tRNA(fMet) + (6S)-5,6,7,8-tetrahydrofolate + H(+). In terms of biological role, attaches a formyl group to the free amino group of methionyl-tRNA(fMet). The formyl group appears to play a dual role in the initiator identity of N-formylmethionyl-tRNA by promoting its recognition by IF2 and preventing the misappropriation of this tRNA by the elongation apparatus. This is Methionyl-tRNA formyltransferase from Geobacter metallireducens (strain ATCC 53774 / DSM 7210 / GS-15).